Reading from the N-terminus, the 78-residue chain is uncharacterized protein (78 aa).

Positions 1 to 22 (MFKKSVLFATLLSGVMAFSTNA) are cleaved as a signal peptide.

Belongs to the BhsA/McbA family.

The protein resides in the periplasm. Its function is as follows. Probably involved in reactive chlorine species (RCS) stress resistance. This is an uncharacterized protein from Escherichia coli (strain K12).